The primary structure comprises 393 residues: S-adenosylmethionine synthase (393 aa).

His17 lines the ATP pocket. Asp19 is a binding site for Mg(2+). Glu45 is a binding site for K(+). L-methionine is bound by residues Glu58 and Gln106. The interval 106-116 is flexible loop; sequence QSAHIAQGVDA. ATP is bound by residues 171–173, 237–238, Asp246, 252–253, Ala269, and Lys273; these read DAK, KF, and RK. Asp246 serves as a coordination point for L-methionine. Residue Lys277 participates in L-methionine binding.

The protein belongs to the AdoMet synthase family. In terms of assembly, homotetramer; dimer of dimers. Mg(2+) serves as cofactor. The cofactor is K(+).

It localises to the cytoplasm. The enzyme catalyses L-methionine + ATP + H2O = S-adenosyl-L-methionine + phosphate + diphosphate. The protein operates within amino-acid biosynthesis; S-adenosyl-L-methionine biosynthesis; S-adenosyl-L-methionine from L-methionine: step 1/1. Functionally, catalyzes the formation of S-adenosylmethionine (AdoMet) from methionine and ATP. The overall synthetic reaction is composed of two sequential steps, AdoMet formation and the subsequent tripolyphosphate hydrolysis which occurs prior to release of AdoMet from the enzyme. This chain is S-adenosylmethionine synthase, found in Ruegeria sp. (strain TM1040) (Silicibacter sp.).